A 687-amino-acid polypeptide reads, in one-letter code: DnaJ protein ERDJ2A (687 aa).

At Met-1–Ser-8 the chain is on the lumenal side. Residues Ala-9–Val-29 traverse the membrane as a helical segment. The Cytoplasmic segment spans residues Lys-30–Asn-65. Residues Phe-66–Tyr-86 form a helical membrane-spanning segment. Residues Tyr-87 to Gly-190 are Lumenal-facing. N-linked (GlcNAc...) asparagine glycosylation occurs at Asn-90. The J domain maps to Asp-99 to Gly-164. The chain crosses the membrane as a helical span at residues Gly-191 to Ile-211. The 399-residue stretch at Pro-205–Lys-603 folds into the SEC63 domain. At Tyr-212–Glu-687 the chain is on the cytoplasmic side. Residues Ser-619–Glu-687 are disordered. Acidic residues predominate over residues Ala-623 to Glu-654.

Interacts with OEP61/TPR7. Expressed in leaves, flower buds and flowers.

It is found in the endoplasmic reticulum membrane. Functionally, required for integral membrane and secreted preprotein translocation across the endoplasmic reticulum membrane. The polypeptide is DnaJ protein ERDJ2A (ERDJ2A) (Arabidopsis thaliana (Mouse-ear cress)).